Here is a 379-residue protein sequence, read N- to C-terminus: Cytochrome b (379 aa).

The next 4 membrane-spanning stretches (helical) occupy residues 33-53 (FGSLLGTCLVIQILTGLFLAM), 77-98 (WLIRYLHANGASMFFICLFIHV), 113-133 (WNIGIILFLTTMATAFVGYVL), and 178-198 (FFAFHFILPFIIAAFTLVHLL). Heme b-binding residues include histidine 83 and histidine 97. Histidine 182 and histidine 196 together coordinate heme b. Histidine 201 provides a ligand contact to a ubiquinone. Transmembrane regions (helical) follow at residues 226–246 (TKDLLGIFLLLLALMILTLFF), 288–308 (LGGVLALILSILILATFPLLN), 320–340 (ITQTIYWIFIANLLVLTWIGG), and 347–367 (FTTIGQIASITYFAIIIILIP).

Belongs to the cytochrome b family. In terms of assembly, the cytochrome bc1 complex contains 11 subunits: 3 respiratory subunits (MT-CYB, CYC1 and UQCRFS1), 2 core proteins (UQCRC1 and UQCRC2) and 6 low-molecular weight proteins (UQCRH/QCR6, UQCRB/QCR7, UQCRQ/QCR8, UQCR10/QCR9, UQCR11/QCR10 and a cleavage product of UQCRFS1). This cytochrome bc1 complex then forms a dimer. Requires heme b as cofactor.

It is found in the mitochondrion inner membrane. Component of the ubiquinol-cytochrome c reductase complex (complex III or cytochrome b-c1 complex) that is part of the mitochondrial respiratory chain. The b-c1 complex mediates electron transfer from ubiquinol to cytochrome c. Contributes to the generation of a proton gradient across the mitochondrial membrane that is then used for ATP synthesis. The sequence is that of Cytochrome b (MT-CYB) from Akodon azarae (Azara's grass mouse).